Reading from the N-terminus, the 714-residue chain is Phosphate acetyltransferase (714 aa).

The phosphate acetyltransferase stretch occupies residues alanine 390–glutamine 714.

It in the N-terminal section; belongs to the CobB/CobQ family. In the C-terminal section; belongs to the phosphate acetyltransferase and butyryltransferase family. Homohexamer.

The protein resides in the cytoplasm. It catalyses the reaction acetyl-CoA + phosphate = acetyl phosphate + CoA. It carries out the reaction propanoyl-CoA + phosphate = propanoyl phosphate + CoA. The protein operates within metabolic intermediate biosynthesis; acetyl-CoA biosynthesis; acetyl-CoA from acetate: step 2/2. Allosterically inhibited by NADH. Involved in acetate metabolism. Catalyzes the reversible interconversion of acetyl-CoA and acetyl phosphate. The direction of the overall reaction changes depending on growth conditions. Required for acetate recapture but not for acetate excretion when this organism is grown on ethanolamine (EA); is unable to complement an eutD deletion during growth on EA. Works with proprionate kinase PduW to capture exogenous propionate and regenerate propionyl-CoA during degradation of propionate and 1,2-propanediol (1,2-PD). The protein is Phosphate acetyltransferase (pta) of Salmonella typhimurium (strain LT2 / SGSC1412 / ATCC 700720).